The sequence spans 103 residues: Small ribosomal subunit protein uS10 (103 aa).

Belongs to the universal ribosomal protein uS10 family. In terms of assembly, part of the 30S ribosomal subunit.

Its function is as follows. Involved in the binding of tRNA to the ribosomes. In Xylella fastidiosa (strain M12), this protein is Small ribosomal subunit protein uS10.